The following is a 385-amino-acid chain: Probable threonine protease PRSS50 (385 aa).

Residues 1 to 39 (MGRWCQTVARGQRPRTSAPSRAGALLLLLLLLRSAGCWG) form the signal peptide. Positions 93–358 (VSEGKVDPYR…YQHWIWDCLN (266 aa)) constitute a Peptidase S1 domain. Asn-133 is a glycosylation site (N-linked (GlcNAc...) asparagine). Residues Cys-138 and Cys-154 are joined by a disulfide bond. Active-site charge relay system residues include His-153 and Asp-206. 3 disulfides stabilise this stretch: Cys-240–Cys-316, Cys-273–Cys-296, and Cys-306–Cys-334. The N-linked (GlcNAc...) asparagine glycan is linked to Asn-279. The active-site Charge relay system is Thr-310.

It belongs to the peptidase S1 family. As to expression, testis specific. Differentially expressed in some breast cancer tissues.

The protein resides in the endoplasmic reticulum. Functionally, may be involved in proteolysis through its threonine endopeptidase activity. In Homo sapiens (Human), this protein is Probable threonine protease PRSS50 (PRSS50).